We begin with the raw amino-acid sequence, 378 residues long: DNA replication and repair protein RecF (378 aa).

31–38 (GENGSGKT) contacts ATP.

Belongs to the RecF family.

The protein resides in the cytoplasm. In terms of biological role, the RecF protein is involved in DNA metabolism; it is required for DNA replication and normal SOS inducibility. RecF binds preferentially to single-stranded, linear DNA. It also seems to bind ATP. In Teredinibacter turnerae (strain ATCC 39867 / T7901), this protein is DNA replication and repair protein RecF.